The primary structure comprises 501 residues: Flagellin (501 aa).

The protein belongs to the bacterial flagellin family.

It localises to the secreted. Its subcellular location is the bacterial flagellum. Its function is as follows. Flagellin is the subunit protein which polymerizes to form the filaments of bacterial flagella. In Salmonella choleraesuis (strain SC-B67), this protein is Flagellin (fliC).